Reading from the N-terminus, the 305-residue chain is UDP-3-O-acyl-N-acetylglucosamine deacetylase (305 aa).

Zn(2+) contacts are provided by histidine 78, histidine 237, and aspartate 241. The active-site Proton donor is histidine 264.

It belongs to the LpxC family. Zn(2+) is required as a cofactor.

It catalyses the reaction a UDP-3-O-[(3R)-3-hydroxyacyl]-N-acetyl-alpha-D-glucosamine + H2O = a UDP-3-O-[(3R)-3-hydroxyacyl]-alpha-D-glucosamine + acetate. It participates in glycolipid biosynthesis; lipid IV(A) biosynthesis; lipid IV(A) from (3R)-3-hydroxytetradecanoyl-[acyl-carrier-protein] and UDP-N-acetyl-alpha-D-glucosamine: step 2/6. In terms of biological role, catalyzes the hydrolysis of UDP-3-O-myristoyl-N-acetylglucosamine to form UDP-3-O-myristoylglucosamine and acetate, the committed step in lipid A biosynthesis. The sequence is that of UDP-3-O-acyl-N-acetylglucosamine deacetylase from Dechloromonas aromatica (strain RCB).